We begin with the raw amino-acid sequence, 411 residues long: Protein BTN1 (411 aa).

Residues 1–29 (MNSKQRVYAFFWIFGLVNNVLYVVILSAA) form the signal peptide. The next 8 membrane-spanning stretches (helical) occupy residues 41 to 61 (LVLL…PFFI), 79 to 99 (IGMI…IAMA), 127 to 147 (SGTG…TSIF), 149 to 169 (LPIR…LLYF), 281 to 300 (YVTY…SLAH), 307 to 329 (LYFL…WIYI), 334 to 356 (WPIM…NTFL), and 371 to 391 (LGAV…VGLG).

The protein belongs to the battenin family.

It is found in the vacuole membrane. Functionally, involved in vacuolar transport and vacuole pH homeostasis. Also required for cytokinesis. The sequence is that of Protein BTN1 (BTN1) from Candida glabrata (strain ATCC 2001 / BCRC 20586 / JCM 3761 / NBRC 0622 / NRRL Y-65 / CBS 138) (Yeast).